Consider the following 250-residue polypeptide: 3-deoxy-manno-octulosonate cytidylyltransferase (250 aa).

Belongs to the KdsB family.

It is found in the cytoplasm. The catalysed reaction is 3-deoxy-alpha-D-manno-oct-2-ulosonate + CTP = CMP-3-deoxy-beta-D-manno-octulosonate + diphosphate. It participates in nucleotide-sugar biosynthesis; CMP-3-deoxy-D-manno-octulosonate biosynthesis; CMP-3-deoxy-D-manno-octulosonate from 3-deoxy-D-manno-octulosonate and CTP: step 1/1. Its pathway is bacterial outer membrane biogenesis; lipopolysaccharide biosynthesis. Activates KDO (a required 8-carbon sugar) for incorporation into bacterial lipopolysaccharide in Gram-negative bacteria. The protein is 3-deoxy-manno-octulosonate cytidylyltransferase of Janthinobacterium sp. (strain Marseille) (Minibacterium massiliensis).